A 133-amino-acid chain; its full sequence is Small ribosomal subunit protein uS8 (133 aa).

The protein belongs to the universal ribosomal protein uS8 family. In terms of assembly, part of the 30S ribosomal subunit. Contacts proteins S5 and S12.

Its function is as follows. One of the primary rRNA binding proteins, it binds directly to 16S rRNA central domain where it helps coordinate assembly of the platform of the 30S subunit. This is Small ribosomal subunit protein uS8 from Crocosphaera subtropica (strain ATCC 51142 / BH68) (Cyanothece sp. (strain ATCC 51142)).